We begin with the raw amino-acid sequence, 429 residues long: Formate-dependent phosphoribosylglycinamide formyltransferase (429 aa).

N(1)-(5-phospho-beta-D-ribosyl)glycinamide contacts are provided by residues 26–27 (EL) and Glu86. ATP-binding positions include Arg118, Lys159, 199–202 (EEHI), and Glu207. An ATP-grasp domain is found at 123 to 319 (ETLVKEAKVP…EFGLHLRAVL (197 aa)). The Mg(2+) site is built by Glu276 and Glu288. N(1)-(5-phospho-beta-D-ribosyl)glycinamide is bound by residues Asp295, Lys375, and 382–383 (RR).

This sequence belongs to the PurK/PurT family. As to quaternary structure, homodimer.

It carries out the reaction N(1)-(5-phospho-beta-D-ribosyl)glycinamide + formate + ATP = N(2)-formyl-N(1)-(5-phospho-beta-D-ribosyl)glycinamide + ADP + phosphate + H(+). The protein operates within purine metabolism; IMP biosynthesis via de novo pathway; N(2)-formyl-N(1)-(5-phospho-D-ribosyl)glycinamide from N(1)-(5-phospho-D-ribosyl)glycinamide (formate route): step 1/1. Involved in the de novo purine biosynthesis. Catalyzes the transfer of formate to 5-phospho-ribosyl-glycinamide (GAR), producing 5-phospho-ribosyl-N-formylglycinamide (FGAR). Formate is provided by PurU via hydrolysis of 10-formyl-tetrahydrofolate. This is Formate-dependent phosphoribosylglycinamide formyltransferase from Pyrococcus furiosus (strain ATCC 43587 / DSM 3638 / JCM 8422 / Vc1).